A 549-amino-acid polypeptide reads, in one-letter code: Glucoamylase, intracellular sporulation-specific (549 aa).

Trp-198 contacts substrate. The Proton acceptor role is filled by Asp-261. The Proton donor role is filled by Glu-264.

The protein belongs to the glycosyl hydrolase 15 family.

The enzyme catalyses Hydrolysis of terminal (1-&gt;4)-linked alpha-D-glucose residues successively from non-reducing ends of the chains with release of beta-D-glucose.. The sequence is that of Glucoamylase, intracellular sporulation-specific (SGA1) from Saccharomyces cerevisiae (strain ATCC 204508 / S288c) (Baker's yeast).